Consider the following 65-residue polypeptide: Small ribosomal subunit protein uS10 (65 aa).

Belongs to the universal ribosomal protein uS10 family. In terms of assembly, part of the 30S ribosomal subunit.

In terms of biological role, involved in the binding of tRNA to the ribosomes. This chain is Small ribosomal subunit protein uS10 (rps10), found in Desulfurococcus mucosus (Desulfurococcus mobilis).